The chain runs to 225 residues: N-(5'-phosphoribosyl)anthranilate isomerase (225 aa).

Belongs to the TrpF family.

It carries out the reaction N-(5-phospho-beta-D-ribosyl)anthranilate = 1-(2-carboxyphenylamino)-1-deoxy-D-ribulose 5-phosphate. Its pathway is amino-acid biosynthesis; L-tryptophan biosynthesis; L-tryptophan from chorismate: step 3/5. This is N-(5'-phosphoribosyl)anthranilate isomerase from Nitrobacter hamburgensis (strain DSM 10229 / NCIMB 13809 / X14).